The primary structure comprises 338 residues: 4-hydroxy-2-oxovalerate aldolase (338 aa).

Positions 4–254 (PRLTDTTLRD…NPGLDVLALM (251 aa)) constitute a Pyruvate carboxyltransferase domain. 12–13 (RD) contributes to the substrate binding site. D13 serves as a coordination point for Mn(2+). Residue H16 is the Proton acceptor of the active site. Substrate contacts are provided by S166 and H193. Residues H193 and H195 each coordinate Mn(2+). Y284 contributes to the substrate binding site.

This sequence belongs to the 4-hydroxy-2-oxovalerate aldolase family.

It catalyses the reaction (S)-4-hydroxy-2-oxopentanoate = acetaldehyde + pyruvate. The polypeptide is 4-hydroxy-2-oxovalerate aldolase (Roseiflexus sp. (strain RS-1)).